A 188-amino-acid polypeptide reads, in one-letter code: Acireductone dioxygenase (188 aa).

Fe(2+) contacts are provided by histidine 97, histidine 99, glutamate 103, and histidine 141. Ni(2+) is bound by residues histidine 97, histidine 99, glutamate 103, and histidine 141.

The protein belongs to the acireductone dioxygenase (ARD) family. As to quaternary structure, monomer. Fe(2+) serves as cofactor. The cofactor is Ni(2+).

The catalysed reaction is 1,2-dihydroxy-5-(methylsulfanyl)pent-1-en-3-one + O2 = 3-(methylsulfanyl)propanoate + CO + formate + 2 H(+). It catalyses the reaction 1,2-dihydroxy-5-(methylsulfanyl)pent-1-en-3-one + O2 = 4-methylsulfanyl-2-oxobutanoate + formate + 2 H(+). The protein operates within amino-acid biosynthesis; L-methionine biosynthesis via salvage pathway; L-methionine from S-methyl-5-thio-alpha-D-ribose 1-phosphate: step 5/6. Functionally, catalyzes 2 different reactions between oxygen and the acireductone 1,2-dihydroxy-3-keto-5-methylthiopentene (DHK-MTPene) depending upon the metal bound in the active site. Fe-containing acireductone dioxygenase (Fe-ARD) produces formate and 2-keto-4-methylthiobutyrate (KMTB), the alpha-ketoacid precursor of methionine in the methionine recycle pathway. Ni-containing acireductone dioxygenase (Ni-ARD) produces methylthiopropionate, carbon monoxide and formate, and does not lie on the methionine recycle pathway. The protein is Acireductone dioxygenase of Xanthomonas euvesicatoria pv. vesicatoria (strain 85-10) (Xanthomonas campestris pv. vesicatoria).